A 160-amino-acid polypeptide reads, in one-letter code: MQALLFISYGAILGASLRWAIGLLFNPLFSSFAFGTLIANLFGCLIIGVLLGLFWQFPQISAEWRLFLITGFLGSLTTFSSFSSEVVELFFNDKWLNGFCVLMMHLFGCLAMTVLGIWIYKICLNFYLNPIHFGFAQLNQQIHRYEIRVIAYIAKFFVSF.

The next 4 membrane-spanning stretches (helical) occupy residues 5-25 (LFISYGAILGASLRWAIGLLF), 34-54 (FGTLIANLFGCLIIGVLLGLF), 67-87 (FLITGFLGSLTTFSSFSSEVV), and 99-119 (FCVLMMHLFGCLAMTVLGIWI). Residues G74 and T77 each coordinate Na(+).

Belongs to the fluoride channel Fluc/FEX (TC 1.A.43) family.

It localises to the cell inner membrane. The catalysed reaction is fluoride(in) = fluoride(out). With respect to regulation, na(+) is not transported, but it plays an essential structural role and its presence is essential for fluoride channel function. Functionally, fluoride-specific ion channel. Important for reducing fluoride concentration in the cell, thus reducing its toxicity. This Haemophilus influenzae (strain ATCC 51907 / DSM 11121 / KW20 / Rd) protein is Fluoride-specific ion channel FluC.